The chain runs to 175 residues: MRCEVPLPLLGLLLCVVGAAAQGGQEEFAVEISGTTVTITCPSSGDDVKWKPDPKMVVNNKYIIQNHDSSPLTVSCTAGDEEHTMYLNAKVCANCEELDTFTVVGIIAADLLITLGVLILVYYFSKNKKGQSRAAAGSRPRAQKMRRPPPVPNPDYEPIRKGQRDVYAGLEHRGF.

The first 21 residues, 1–21, serve as a signal peptide directing secretion; sequence MRCEVPLPLLGLLLCVVGAAA. The Extracellular portion of the chain corresponds to 22 to 100; that stretch reads QGGQEEFAVE…VCANCEELDT (79 aa). The chain crosses the membrane as a helical span at residues 101–121; sequence FTVVGIIAADLLITLGVLILV. The Cytoplasmic portion of the chain corresponds to 122 to 175; that stretch reads YYFSKNKKGQSRAAAGSRPRAQKMRRPPPVPNPDYEPIRKGQRDVYAGLEHRGF. A disordered region spans residues 133-163; the sequence is RAAAGSRPRAQKMRRPPPVPNPDYEPIRKGQ. One can recognise an ITAM domain in the interval 146–173; that stretch reads RRPPPVPNPDYEPIRKGQRDVYAGLEHR.

The TCR/CD3 complex of T-lymphocytes consists of either a TCR alpha/beta or TCR gamma/delta heterodimer coexpressed at the cell surface with the invariant subunits of CD3 labeled gamma, delta, epsilon, zeta, and eta.

It localises to the cell membrane. Functionally, the CD3 complex mediates signal transduction, resulting in T-cell activation and proliferation. Required for normal immune responses. The chain is T-cell surface glycoprotein CD3 epsilon chain (CD3E) from Gallus gallus (Chicken).